The chain runs to 330 residues: B3 domain-containing protein REM21 (330 aa).

The TF-B3 DNA-binding region spans 23–116 (PRFFTVFLSH…SYEVSIYGRG (94 aa)). Residues 129 to 138 (EISDDTEDDN) show a composition bias toward acidic residues. The segment at 129–169 (EISDDTEDDNVSLHSPSNVSLDSLSNDSHHSTSNVSLRSLS) is disordered. Residues 142–162 (HSPSNVSLDSLSNDSHHSTSN) are compositionally biased toward low complexity.

Its subcellular location is the nucleus. This chain is B3 domain-containing protein REM21 (REM21), found in Arabidopsis thaliana (Mouse-ear cress).